The following is a 235-amino-acid chain: Small ribosomal subunit protein uS2 (235 aa).

This sequence belongs to the universal ribosomal protein uS2 family.

This is Small ribosomal subunit protein uS2 from Anoxybacillus flavithermus (strain DSM 21510 / WK1).